Reading from the N-terminus, the 225-residue chain is Superoxide dismutase [Mn], mitochondrial (225 aa).

The N-terminal 27 residues, 1–27, are a transit peptide targeting the mitochondrion; the sequence is MITAITRTALPRATLRTSLATMSTIRA. Positions 53, 101, 187, and 191 each coordinate Mn(2+).

This sequence belongs to the iron/manganese superoxide dismutase family. Requires Mn(2+) as cofactor.

The protein resides in the mitochondrion. The protein localises to the cytoplasm. It carries out the reaction 2 superoxide + 2 H(+) = H2O2 + O2. Its function is as follows. Destroys radicals which are normally produced within the cells and which are toxic to biological systems. In terms of biological role, destroys mitochondrial radicals produced by oxidative stress. Destroys cytoplasmic radicals produced in low copper environments; a condition which inactivates the cytoplasmic copper-dependent superoxide dismutase SOD1. The polypeptide is Superoxide dismutase [Mn], mitochondrial (Cryptococcus neoformans var. grubii serotype A (strain H99 / ATCC 208821 / CBS 10515 / FGSC 9487) (Filobasidiella neoformans var. grubii)).